An 81-amino-acid chain; its full sequence is Photosystem I iron-sulfur center (81 aa).

2 consecutive 4Fe-4S ferredoxin-type domains span residues 2–31 and 37–68; these read SHAV…MVPW and GQIA…IRVY. Residues Cys-11, Cys-14, Cys-17, Cys-21, Cys-48, Cys-51, Cys-54, and Cys-58 each coordinate [4Fe-4S] cluster.

In terms of assembly, the cyanobacterial PSI reaction center is composed of one copy each of PsaA,B,C,D,E,F,I,J,K,L,M and X, and forms trimeric complexes. It depends on [4Fe-4S] cluster as a cofactor.

The protein resides in the cellular thylakoid membrane. It carries out the reaction reduced [plastocyanin] + hnu + oxidized [2Fe-2S]-[ferredoxin] = oxidized [plastocyanin] + reduced [2Fe-2S]-[ferredoxin]. Apoprotein for the two 4Fe-4S centers FA and FB of photosystem I (PSI); essential for photochemical activity. FB is the terminal electron acceptor of PSI, donating electrons to ferredoxin. The C-terminus interacts with PsaA/B/D and helps assemble the protein into the PSI complex. Required for binding of PsaD and PsaE to PSI. PSI is a plastocyanin/cytochrome c6-ferredoxin oxidoreductase, converting photonic excitation into a charge separation, which transfers an electron from the donor P700 chlorophyll pair to the spectroscopically characterized acceptors A0, A1, FX, FA and FB in turn. This chain is Photosystem I iron-sulfur center, found in Synechococcus sp. (strain WH8103).